The following is a 279-amino-acid chain: MKDIFLCSICNVSSGGCAEDCAYCTQSAKYRVDIEKYKQKSLENILEEARRARASGALGFCLVTAGRSLDSAKTAYISEAARSIKEAGLELHLIACCGSATKEALAELKKNGVDSYNHNLETAKSFFPKICTTHSWEERYETCESALEVGLGLCTGGIFGLGEGWSERLEFLHALQTLSPHSVPVNFYIPNPSLPLEVEALAQEEALECVRLAREYLPSARLMIAGGREKVFGQAQKPLFEAGINAVVLGDYLTTKGNRPSEDIAMIRSFGFEIAEACH.

One can recognise a Radical SAM core domain in the interval 1-228 (MKDIFLCSIC…SARLMIAGGR (228 aa)). Residues Cys17, Cys21, and Cys24 each contribute to the [4Fe-4S] cluster site. [2Fe-2S] cluster-binding residues include Cys61, Cys96, Cys154, and Arg221.

Belongs to the radical SAM superfamily. Biotin synthase family. In terms of assembly, homodimer. [4Fe-4S] cluster is required as a cofactor. [2Fe-2S] cluster serves as cofactor.

It carries out the reaction (4R,5S)-dethiobiotin + (sulfur carrier)-SH + 2 reduced [2Fe-2S]-[ferredoxin] + 2 S-adenosyl-L-methionine = (sulfur carrier)-H + biotin + 2 5'-deoxyadenosine + 2 L-methionine + 2 oxidized [2Fe-2S]-[ferredoxin]. It participates in cofactor biosynthesis; biotin biosynthesis; biotin from 7,8-diaminononanoate: step 2/2. Its function is as follows. Catalyzes the conversion of dethiobiotin (DTB) to biotin by the insertion of a sulfur atom into dethiobiotin via a radical-based mechanism. The protein is Biotin synthase of Wolinella succinogenes (strain ATCC 29543 / DSM 1740 / CCUG 13145 / JCM 31913 / LMG 7466 / NCTC 11488 / FDC 602W) (Vibrio succinogenes).